The chain runs to 589 residues: Aspartate--tRNA ligase 2 (589 aa).

Glutamate 174 contacts L-aspartate. The interval 198–201 (QITK) is aspartate. Arginine 220 serves as a coordination point for L-aspartate. Residues 220 to 222 (RDE) and glutamine 229 contribute to the ATP site. Residue histidine 443 participates in L-aspartate binding. Glutamate 477 contacts ATP. Residue arginine 484 participates in L-aspartate binding. 529 to 532 (GLDR) is an ATP binding site.

The protein belongs to the class-II aminoacyl-tRNA synthetase family. Type 1 subfamily. Homodimer.

The protein resides in the cytoplasm. It catalyses the reaction tRNA(Asp) + L-aspartate + ATP = L-aspartyl-tRNA(Asp) + AMP + diphosphate. Catalyzes the attachment of L-aspartate to tRNA(Asp) in a two-step reaction: L-aspartate is first activated by ATP to form Asp-AMP and then transferred to the acceptor end of tRNA(Asp). The chain is Aspartate--tRNA ligase 2 from Streptococcus mutans serotype c (strain ATCC 700610 / UA159).